Reading from the N-terminus, the 495-residue chain is Glycerol kinase (495 aa).

Residue T13 participates in ADP binding. ATP is bound by residues T13, T14, and S15. T13 contacts sn-glycerol 3-phosphate. R17 is a binding site for ADP. Positions 83, 84, 135, and 244 each coordinate sn-glycerol 3-phosphate. Residues R83, E84, Y135, D244, and Q245 each coordinate glycerol. 2 residues coordinate ADP: T266 and G309. Positions 266, 309, 313, and 410 each coordinate ATP. The ADP site is built by G410 and N414.

Belongs to the FGGY kinase family.

The catalysed reaction is glycerol + ATP = sn-glycerol 3-phosphate + ADP + H(+). It participates in polyol metabolism; glycerol degradation via glycerol kinase pathway; sn-glycerol 3-phosphate from glycerol: step 1/1. Inhibited by fructose 1,6-bisphosphate (FBP). In terms of biological role, key enzyme in the regulation of glycerol uptake and metabolism. Catalyzes the phosphorylation of glycerol to yield sn-glycerol 3-phosphate. This is Glycerol kinase from Shewanella woodyi (strain ATCC 51908 / MS32).